The following is a 265-amino-acid chain: Cyclin-B2-5 (265 aa).

Belongs to the cyclin family. Cyclin AB subfamily.

The sequence is that of Cyclin-B2-5 (CYCB2-5) from Arabidopsis thaliana (Mouse-ear cress).